The primary structure comprises 251 residues: Flap endonuclease Xni (251 aa).

D104 serves as a coordination point for Mg(2+). The region spanning 160–249 (VLPQQLPDYW…IDGNLQQLRL (90 aa)) is the 5'-3' exonuclease domain. Residues L171, A172, P180, V182, and I185 each contribute to the K(+) site. The interval 184-189 (GIGPKS) is interaction with DNA.

This sequence belongs to the Xni family. Mg(2+) is required as a cofactor. Requires K(+) as cofactor.

Its function is as follows. Has flap endonuclease activity. During DNA replication, flap endonucleases cleave the 5'-overhanging flap structure that is generated by displacement synthesis when DNA polymerase encounters the 5'-end of a downstream Okazaki fragment. This chain is Flap endonuclease Xni, found in Citrobacter koseri (strain ATCC BAA-895 / CDC 4225-83 / SGSC4696).